The primary structure comprises 399 residues: Glutathione-independent formaldehyde dehydrogenase (399 aa).

Residue Cys-47 coordinates Zn(2+). Positions 48, 49, and 52 each coordinate NAD(+). His-68, Cys-98, Cys-101, Cys-104, Cys-112, and Asp-170 together coordinate Zn(2+). Residues Val-198, Asp-218, Arg-223, Val-263, Arg-268, Pro-300, Gln-338, and Thr-339 each coordinate NAD(+).

It belongs to the zinc-containing alcohol dehydrogenase family. As to quaternary structure, homotetramer. Requires Zn(2+) as cofactor.

It catalyses the reaction formaldehyde + NAD(+) + H2O = formate + NADH + 2 H(+). It carries out the reaction acetaldehyde + NAD(+) + H2O = acetate + NADH + 2 H(+). Dehydrogenase that catalyzes the NAD(+)-dependent oxidation of formaldehyde and acetaldehyde. Shows no detectable activity against either aldehydes with longer carbon chains or ethanol. This is Glutathione-independent formaldehyde dehydrogenase from Pseudomonas aeruginosa (strain LESB58).